The following is a 483-amino-acid chain: Probable glycine dehydrogenase (decarboxylating) subunit 2 (483 aa).

Lys-267 is subject to N6-(pyridoxal phosphate)lysine.

It belongs to the GcvP family. C-terminal subunit subfamily. In terms of assembly, the glycine cleavage system is composed of four proteins: P, T, L and H. In this organism, the P 'protein' is a heterodimer of two subunits. The cofactor is pyridoxal 5'-phosphate.

The enzyme catalyses N(6)-[(R)-lipoyl]-L-lysyl-[glycine-cleavage complex H protein] + glycine + H(+) = N(6)-[(R)-S(8)-aminomethyldihydrolipoyl]-L-lysyl-[glycine-cleavage complex H protein] + CO2. Its function is as follows. The glycine cleavage system catalyzes the degradation of glycine. The P protein binds the alpha-amino group of glycine through its pyridoxal phosphate cofactor; CO(2) is released and the remaining methylamine moiety is then transferred to the lipoamide cofactor of the H protein. The sequence is that of Probable glycine dehydrogenase (decarboxylating) subunit 2 from Kosmotoga olearia (strain ATCC BAA-1733 / DSM 21960 / TBF 19.5.1).